We begin with the raw amino-acid sequence, 130 residues long: MAENQYYGTGRRKSSSARVFIKPGSGNIVINKRSLEVYFGRETARMVVRQPLELVDMLGKLDLYITVKGGGISGQAGAIRHGITRALMAYDETLRSDLRKAGFVTRDAREVERKKVGLRKARRRPQFSKR.

The protein belongs to the universal ribosomal protein uS9 family.

This is Small ribosomal subunit protein uS9 from Photorhabdus laumondii subsp. laumondii (strain DSM 15139 / CIP 105565 / TT01) (Photorhabdus luminescens subsp. laumondii).